The sequence spans 443 residues: Anthocyanidin 3-O-glucoside 5-O-glucosyltransferase 2 (443 aa).

An N-terminal signal peptide occupies residues 1 to 22 (MVRRRVLLATFPAQGHINPALQ). Catalysis depends on His16, which acts as the Proton acceptor. His16 provides a ligand contact to an anthocyanidin. Positions 340, 355, 358, 359, 360, 363, 379, and 380 each coordinate UDP-alpha-D-glucose.

The protein belongs to the UDP-glycosyltransferase family.

It catalyses the reaction an anthocyanidin 3-O-beta-D-glucoside + UDP-alpha-D-glucose = an anthocyanidin 3,5-di-O-beta-D-glucoside + UDP + 2 H(+). It functions in the pathway pigment biosynthesis; anthocyanin biosynthesis. In terms of biological role, catalyzes the glucosylation at the O-5 position of anthocyanidin 3-glucosides to form anthocyanidin 3,5-di-O-glucosides using UDP-glucose as sugar donor. Anthocyanidin 3,5-di-O-glucosides are molecules that are responsible for pigmentation. Also acts on anthocyanidin 3-O-(6-O-malonylglucoside). Much less active with hydroxycinnamoylglucose derivatives. No activity in the absence of the 3-O-glucoside group. The polypeptide is Anthocyanidin 3-O-glucoside 5-O-glucosyltransferase 2 (PF3R6) (Perilla frutescens (Beefsteak mint)).